The primary structure comprises 252 residues: Transcriptional regulatory protein HptR (252 aa).

The Response regulatory domain maps to 3-118 (KVVICDDERI…QLEVILGRLV (116 aa)). Asp55 carries the post-translational modification 4-aspartylphosphate. The region spanning 153-250 (NQIVDQIKQS…QMSPSDYCKQ (98 aa)) is the HTH araC/xylS-type domain. 2 consecutive DNA-binding regions (H-T-H motif) follow at residues 170–191 (SDLI…KDHV) and 217–240 (HYEI…KKYL).

Phosphorylated by HptS.

The protein localises to the cytoplasm. Member of the two-component regulatory system HptS/HptR that regulates genes involved in hexose phosphate transport system in response to changes in extracellular phosphate sources. Activates uhpT expression to facilitate glucose-6-phosphate/G6P utilization by directly binding to its promoter. Antagonizes CcpA-dependent transcription of a subset of CcpA-regulated genes involved in antibiotic susceptibility. The polypeptide is Transcriptional regulatory protein HptR (hptR) (Staphylococcus aureus (strain Mu50 / ATCC 700699)).